We begin with the raw amino-acid sequence, 299 residues long: 4-diphosphocytidyl-2-C-methyl-D-erythritol kinase (299 aa).

Residue K16 is part of the active site. 97-107 (PVASGIGGGSA) lines the ATP pocket. The active site involves D140.

It belongs to the GHMP kinase family. IspE subfamily.

It catalyses the reaction 4-CDP-2-C-methyl-D-erythritol + ATP = 4-CDP-2-C-methyl-D-erythritol 2-phosphate + ADP + H(+). Its pathway is isoprenoid biosynthesis; isopentenyl diphosphate biosynthesis via DXP pathway; isopentenyl diphosphate from 1-deoxy-D-xylulose 5-phosphate: step 3/6. Functionally, catalyzes the phosphorylation of the position 2 hydroxy group of 4-diphosphocytidyl-2C-methyl-D-erythritol. The protein is 4-diphosphocytidyl-2-C-methyl-D-erythritol kinase of Roseobacter denitrificans (strain ATCC 33942 / OCh 114) (Erythrobacter sp. (strain OCh 114)).